Here is a 160-residue protein sequence, read N- to C-terminus: Transmembrane protein 216 (160 aa).

4 consecutive transmembrane segments (helical) span residues 41 to 61, 68 to 88, 101 to 121, and 134 to 154; these read WYFAAFFVAEILMFIYKGVIL, LILDVVLLLLFSGLETLRLFY, LFVSVAILVPCAVLSVYYLLL, and AVLLCFYGFELVLGVMTISIF.

As to quaternary structure, part of the tectonic-like complex (also named B9 complex).

The protein resides in the membrane. It localises to the cytoplasm. The protein localises to the cytoskeleton. It is found in the cilium basal body. Its function is as follows. Part of the tectonic-like complex which is required for tissue-specific ciliogenesis and may regulate ciliary membrane composition. This is Transmembrane protein 216 (tmem216) from Danio rerio (Zebrafish).